The sequence spans 181 residues: Large ribosomal subunit protein uL5 (181 aa).

Belongs to the universal ribosomal protein uL5 family. Part of the 50S ribosomal subunit; part of the 5S rRNA/L5/L18/L25 subcomplex. Contacts the 5S rRNA and the P site tRNA. Forms a bridge to the 30S subunit in the 70S ribosome.

In terms of biological role, this is one of the proteins that bind and probably mediate the attachment of the 5S RNA into the large ribosomal subunit, where it forms part of the central protuberance. In the 70S ribosome it contacts protein S13 of the 30S subunit (bridge B1b), connecting the 2 subunits; this bridge is implicated in subunit movement. Contacts the P site tRNA; the 5S rRNA and some of its associated proteins might help stabilize positioning of ribosome-bound tRNAs. In Helicobacter pylori (strain J99 / ATCC 700824) (Campylobacter pylori J99), this protein is Large ribosomal subunit protein uL5.